The following is a 72-amino-acid chain: Small ribosomal subunit protein bS18 (72 aa).

The protein belongs to the bacterial ribosomal protein bS18 family. As to quaternary structure, part of the 30S ribosomal subunit. Forms a tight heterodimer with protein bS6.

In terms of biological role, binds as a heterodimer with protein bS6 to the central domain of the 16S rRNA, where it helps stabilize the platform of the 30S subunit. The protein is Small ribosomal subunit protein bS18 of Aquifex aeolicus (strain VF5).